A 1554-amino-acid polypeptide reads, in one-letter code: Lysine-specific demethylase 5C (1554 aa).

Residues 14-55 (CPVFEPSWAEFRDPLGYIAKIRPIAEKSGICKIRPPADWQPP) enclose the JmjN domain. Residues 79–169 (TRVKLNYLDQ…IVYPYEMYQS (91 aa)) form the ARID domain. The span at 197-207 (LRQSVQPSKFN) shows a compositional bias: polar residues. A disordered region spans residues 197 to 227 (LRQSVQPSKFNSYGRRAKRLQPDPEPTEEDI). Glycyl lysine isopeptide (Lys-Gly) (interchain with G-Cter in SUMO2) cross-links involve residues Lys205, Lys229, Lys244, and Lys274. The interval 284 to 303 (ESTSPKTFLEGKEELSHSPE) is disordered. Ser287 carries the post-translational modification Phosphoserine. Residue Lys295 forms a Glycyl lysine isopeptide (Lys-Gly) (interchain with G-Cter in SUMO2) linkage. 2 positions are modified to phosphoserine: Ser301 and Ser317. The PHD-type 1 zinc-finger motif lies at 326–372 (VCRMCSRGDEDDKLLLCDGCDDNYHIFCLLPPLPEIPKGVWRCPKCV). The JmjC domain maps to 468-634 (EYATSGWNLN…AGRQCIEHYR (167 aa)). Residues His514, Asp517, and His602 each contribute to the Fe cation site. Phosphoserine is present on residues Ser893 and Ser897. Residue Lys1127 forms a Glycyl lysine isopeptide (Lys-Gly) (interchain with G-Cter in SUMO2) linkage. The PHD-type 2 zinc finger occupies 1187–1248 (ICVCGQVPAG…DTKFLCPLCM (62 aa)). Disordered regions lie at residues 1319-1364 (SKPE…EGSG) and 1437-1535 (AERH…APFS). A Phosphoserine modification is found at Ser1353. Basic residues predominate over residues 1442-1457 (SRTRGRALERRRRRKV). Residues 1458–1475 (DRGGEPDDPAREELEPKR) are compositionally biased toward basic and acidic residues. Over residues 1482–1497 (EAEEVQEEEELEEETG) the composition is skewed to acidic residues.

Belongs to the JARID1 histone demethylase family. Part of two distinct complexes, one containing E2F6, and the other containing REST. Interacts with ZMYND8. Fe(2+) is required as a cofactor.

It is found in the nucleus. The catalysed reaction is N(6),N(6),N(6)-trimethyl-L-lysyl(4)-[histone H3] + 3 2-oxoglutarate + 3 O2 = L-lysyl(4)-[histone H3] + 3 formaldehyde + 3 succinate + 3 CO2. Histone demethylase that specifically demethylates 'Lys-4' of histone H3, thereby playing a central role in histone code. Does not demethylate histone H3 'Lys-9', H3 'Lys-27', H3 'Lys-36', H3 'Lys-79' or H4 'Lys-20'. Demethylates trimethylated and dimethylated but not monomethylated H3 'Lys-4'. Participates in transcriptional repression of neuronal genes by recruiting histone deacetylases and REST at neuron-restrictive silencer elements. Represses the CLOCK-BMAL1 heterodimer-mediated transcriptional activation of the core clock component PER2. The protein is Lysine-specific demethylase 5C (Kdm5c) of Mus musculus (Mouse).